Reading from the N-terminus, the 587-residue chain is 5-aminolevulinate synthase, erythroid-specific, mitochondrial (587 aa).

The N-terminal 49 residues, 1 to 49 (MVAAAMLLRSCPVLSKGPTGLLGKVAKTYQFLFGIGRCPILATQGPTCS), are a transit peptide targeting the mitochondrion. Arg163 provides a ligand contact to succinyl-CoA. Pyridoxal 5'-phosphate-binding residues include Cys258 and Phe259. Succinyl-CoA contacts are provided by Ser280 and Lys299. Positions 332, 360, and 388 each coordinate pyridoxal 5'-phosphate. Residue Lys391 is part of the active site. Residue Lys391 is modified to N6-(pyridoxal phosphate)lysine. Pyridoxal 5'-phosphate-binding residues include Thr420 and Thr421. Thr508 provides a ligand contact to succinyl-CoA.

Belongs to the class-II pyridoxal-phosphate-dependent aminotransferase family. In terms of assembly, homodimer. Interacts with SUCLA2. The cofactor is pyridoxal 5'-phosphate. In terms of tissue distribution, erythroid-specific.

It is found in the mitochondrion inner membrane. The catalysed reaction is succinyl-CoA + glycine + H(+) = 5-aminolevulinate + CO2 + CoA. It functions in the pathway porphyrin-containing compound metabolism; protoporphyrin-IX biosynthesis; 5-aminolevulinate from glycine: step 1/1. Catalyzes the pyridoxal 5'-phosphate (PLP)-dependent condensation of succinyl-CoA and glycine to form aminolevulinic acid (ALA), with CoA and CO2 as by-products. Contributes significantly to heme formation during erythropoiesis. This Rattus norvegicus (Rat) protein is 5-aminolevulinate synthase, erythroid-specific, mitochondrial (Alas2).